A 305-amino-acid chain; its full sequence is Porphobilinogen deaminase (305 aa).

C239 carries the post-translational modification S-(dipyrrolylmethanemethyl)cysteine.

This sequence belongs to the HMBS family. As to quaternary structure, monomer. The cofactor is dipyrromethane.

It catalyses the reaction 4 porphobilinogen + H2O = hydroxymethylbilane + 4 NH4(+). The protein operates within porphyrin-containing compound metabolism; protoporphyrin-IX biosynthesis; coproporphyrinogen-III from 5-aminolevulinate: step 2/4. In terms of biological role, tetrapolymerization of the monopyrrole PBG into the hydroxymethylbilane pre-uroporphyrinogen in several discrete steps. The polypeptide is Porphobilinogen deaminase (Dichelobacter nodosus (strain VCS1703A)).